A 644-amino-acid chain; its full sequence is Arabinosyltransferase XEG113 (644 aa).

At 1-17 the chain is on the cytoplasmic side; the sequence is MVEGWRNGFRDATNSKP. The helical; Signal-anchor for type II membrane protein transmembrane segment at 18 to 38 threads the bilayer; the sequence is LFVTIYATVIIGVLVSSFYVF. The Lumenal portion of the chain corresponds to 39 to 644; sequence SAIYSPTNGS…QTPEEDHPPL (606 aa). N-linked (GlcNAc...) asparagine glycans are attached at residues Asn46 and Asn70. The DXD motif motif lies at 226 to 228; it reads DTD. Asn446 and Asn542 each carry an N-linked (GlcNAc...) asparagine glycan.

This sequence belongs to the glycosyltransferase 77 family.

It is found in the golgi apparatus membrane. Plays a role in the arabinosylation of cell wall components. Involved in the arabinosylation of extensin proteins in root hair cells. Extensins are structural glycoproteins present in cell walls and its arabinosylation is important for cell elongation, root hair cell development, lateral root development and root hair tip growth. This is Arabinosyltransferase XEG113 from Arabidopsis thaliana (Mouse-ear cress).